Here is a 603-residue protein sequence, read N- to C-terminus: Extracellular basic protease (603 aa).

The first 21 residues, 1–21 (MNLSNISAVKVLTLVVSAAIA), serve as a signal peptide directing secretion. A propeptide spanning residues 22–132 (GQVCAAESIV…VEVDRLAYPK (111 aa)) is cleaved from the precursor. The region spanning 143–468 (QWHYFGNYGV…SGIVDANAAV (326 aa)) is the Peptidase S8 domain. Asp173 (charge relay system) is an active-site residue. The disordered stretch occupies residues 197 to 221 (PNARDGDQRDNNPADEGDWFDNWDC). 2 cysteine pairs are disulfide-bonded: Cys221–Cys273 and Cys315–Cys352. Catalysis depends on His237, which acts as the Charge relay system. Residue Ser409 is the Charge relay system of the active site. The propeptide occupies 477–603 (RAQPRPPVNQ…GSIDSWSLTF (127 aa)). Positions 478–603 (AQPRPPVNQP…GSIDSWSLTF (126 aa)) constitute a P/Homo B domain.

Belongs to the peptidase S8 family.

The protein localises to the secreted. The chain is Extracellular basic protease (bprV) from Dichelobacter nodosus (Bacteroides nodosus).